The primary structure comprises 190 residues: Corticoliberin (190 aa).

Positions 1-24 (MRLRLLVSVGVLLVALLPSPPCRA) are cleaved as a signal peptide. A propeptide spanning residues 25–147 (LLSRGPIPGA…QEAPAARKRR (123 aa)) is cleaved from the precursor. 2 disordered regions span residues 33–57 (GARQASQHPQPLSFFQPPPQPQEPQ) and 116–151 (RRPFDSPAGPAERGTENALGSRQEAPAARKRRSQEP). Ala188 is subject to Alanine amide.

Belongs to the sauvagine/corticotropin-releasing factor/urotensin I family. In terms of assembly, interacts (via C-terminus) with CRFR1 (via N-terminal extracellular domain). As to expression, produced by the hypothalamus.

Its subcellular location is the secreted. Hormone regulating the release of corticotropin from pituitary gland. Induces NLRP6 in intestinal epithelial cells, hence may influence gut microbiota profile. In Bos taurus (Bovine), this protein is Corticoliberin (CRH).